Reading from the N-terminus, the 149-residue chain is MSKTLSFKTYSAKPAEVERTWYVIDAEGLVLGRMASEIAKVLRGKHKPQFTPHIDTGDFIVVTNAEKVLLTGRKSEQKTYFTHSHYPGGVRIDEVKDVIRTKPERVIENAVWGMLPHNNLGRQLFRKLKVYAGTNHPHASQSPIEMKIN.

This sequence belongs to the universal ribosomal protein uL13 family. In terms of assembly, part of the 50S ribosomal subunit.

This protein is one of the early assembly proteins of the 50S ribosomal subunit, although it is not seen to bind rRNA by itself. It is important during the early stages of 50S assembly. In Chlorobium chlorochromatii (strain CaD3), this protein is Large ribosomal subunit protein uL13.